Reading from the N-terminus, the 552-residue chain is Chaperonin GroEL (552 aa).

ATP-binding positions include 30 to 33 (TLGP), lysine 51, 87 to 91 (DGTTT), glycine 415, and aspartate 499.

It belongs to the chaperonin (HSP60) family. Forms a cylinder of 14 subunits composed of two heptameric rings stacked back-to-back. Interacts with the co-chaperonin GroES.

It is found in the cytoplasm. The enzyme catalyses ATP + H2O + a folded polypeptide = ADP + phosphate + an unfolded polypeptide.. Its function is as follows. Together with its co-chaperonin GroES, plays an essential role in assisting protein folding. The GroEL-GroES system forms a nano-cage that allows encapsulation of the non-native substrate proteins and provides a physical environment optimized to promote and accelerate protein folding. This Hamiltonella defensa subsp. Acyrthosiphon pisum (strain 5AT) protein is Chaperonin GroEL.